A 300-amino-acid chain; its full sequence is Cation-efflux pump FieF (300 aa).

Helical transmembrane passes span Ala12–Trp32, Leu40–Val60, Ala82–Phe102, and Pro114–Phe134. 2 residues coordinate Zn(2+): Asp45 and Asp49. Zn(2+) is bound by residues His153 and Asp157. The next 2 helical transmembrane spans lie at Gln155–Phe175 and Ala178–Gly198.

This sequence belongs to the cation diffusion facilitator (CDF) transporter (TC 2.A.4) family. FieF subfamily. As to quaternary structure, homodimer.

It is found in the cell inner membrane. It carries out the reaction Zn(2+)(in) + H(+)(out) = Zn(2+)(out) + H(+)(in). The enzyme catalyses Cd(2+)(in) + H(+)(out) = Cd(2+)(out) + H(+)(in). The catalysed reaction is Fe(2+)(in) + H(+)(out) = Fe(2+)(out) + H(+)(in). Its function is as follows. Divalent metal cation transporter which exports Zn(2+), Cd(2+) and possibly Fe(2+). May be involved in zinc and iron detoxification by efflux. The polypeptide is Cation-efflux pump FieF (Yersinia pestis bv. Antiqua (strain Antiqua)).